Reading from the N-terminus, the 185-residue chain is Prorelaxin H1 (185 aa).

A signal peptide spans 1–22 (MPRLFLFHLLEFCLLLNQFSRA). Disulfide bonds link Cys-35–Cys-172, Cys-47–Cys-185, and Cys-171–Cys-176. Residues 56 to 158 (SLSQEDAPQT…KYLGLDTHSQ (103 aa)) constitute a propeptide, connecting peptide.

This sequence belongs to the insulin family. Heterodimer of a B chain and an A chain linked by two disulfide bonds. In terms of tissue distribution, prostate. Not expressed in placenta, decidua or ovary.

It is found in the secreted. Relaxin is an ovarian hormone that acts with estrogen to produce dilatation of the birth canal in many mammals. May be involved in remodeling of connective tissues during pregnancy, promoting growth of pubic ligaments and ripening of the cervix. The polypeptide is Prorelaxin H1 (RLN1) (Homo sapiens (Human)).